Here is a 593-residue protein sequence, read N- to C-terminus: MKCQRIEDDFTLKFYVFLLINTCSSIPFLFITTRGMASMHSLAILLLGVVMLTTPVLAEYYKPPTYEPPIEKPPIYEPPPTEEPPPVYKPPIIHPPPNYKPPAHTPPIYHPPHEKPPPVYEPPYEKPPHEEPPREYQPPRENPSPEYEPPHHGKPPYENPPPEYKPPYEKPPPEYQPPHHEKPPPEYQPPHEKPPPEYTPPYEKPPPEYQPPHEKPPHESSPPEYQPPHEKPPHEHPPPEYQPPHEKPPHEHPPPEYQPPHEKPPHVHPPPEYQPPHEHPPPEYQPPHEKPPHVHPPPEYQPPYLKPPHEKSPYEPPPQEYQPPHEKPPQMKPPSEYQPPHEKPPHEHPPPEYQPPHVHPPPEHQPPHENPPHENPPPEYQPPHEKPPHYEHPPPENQPPHVHPPPEYKPPHEKPPHEHPPPEYQPPQENPPPEYKPPHEKPPHENTPPTHHPPHEKPPQEISLPEYQPPPPSTKYQPPHEKSPHENPPPEFAPPHKKLPPNYNPPRHEKPMPKYQPPHEKLPPVYKSPYVKTPPPQAYHPPPPIYHHPPFHPPPHVKPPVYETPLAKVPQMKKPTRYNTRPFGHYPPYKKNQ.

Residues 71 to 110 (EKPPIYEPPPTEEPPPVYKPPIIHPPPNYKPPAHTPPIYH) show a composition bias toward pro residues. The disordered stretch occupies residues 71–593 (EKPPIYEPPP…GHYPPYKKNQ (523 aa)). 2 stretches are compositionally biased toward basic and acidic residues: residues 123 to 138 (PYEK…EYQP) and 166 to 195 (PPYE…EKPP). Residues 196–210 (PEYTPPYEKPPPEYQ) are compositionally biased toward pro residues. 2 stretches are compositionally biased toward basic and acidic residues: residues 227–265 (PPHE…EKPP) and 275–292 (PPHE…EKPP). Residues 294–306 (VHPPPEYQPPYLK) show a composition bias toward pro residues. Basic and acidic residues-rich tracts occupy residues 339 to 350 (PPHEKPPHEHPP), 360 to 372 (PPPE…ENPP), 382 to 394 (PPHE…EHPP), and 404 to 421 (PPPE…EHPP). Positions 422–435 (PEYQPPQENPPPEY) are enriched in pro residues. The span at 506–522 (PRHEKPMPKYQPPHEKL) shows a compositional bias: basic and acidic residues. Positions 532–558 (KTPPPQAYHPPPPIYHHPPFHPPPHVK) are enriched in pro residues.

Belongs to the nodulin 75 family.

Its function is as follows. Involved in early stages of root nodule development. The sequence is that of Early nodule-specific protein 2 from Medicago truncatula (Barrel medic).